The following is a 226-amino-acid chain: Probable proteasome subunit beta type-1 (226 aa).

The propeptide at 1 to 24 (MATTVKDTMNVDINAIKKGEIRMG) is removed in mature form. Thr25 serves as the catalytic Nucleophile.

The protein belongs to the peptidase T1B family. The 26S proteasome consists of a 20S proteasome core and two 19S regulatory subunits. The 20S proteasome core is composed of 28 subunits that are arranged in four stacked rings, resulting in a barrel-shaped structure. The two end rings are each formed by seven alpha subunits, and the two central rings are each formed by seven beta subunits. The catalytic chamber with the active sites is on the inside of the barrel.

Its subcellular location is the cytoplasm. It localises to the nucleus. The catalysed reaction is Cleavage of peptide bonds with very broad specificity.. Its function is as follows. The proteasome is a multicatalytic proteinase complex which is characterized by its ability to cleave peptides with Arg, Phe, Tyr, Leu, and Glu adjacent to the leaving group at neutral or slightly basic pH. The proteasome has an ATP-dependent proteolytic activity. This chain is Probable proteasome subunit beta type-1 (pre3), found in Schizosaccharomyces pombe (strain 972 / ATCC 24843) (Fission yeast).